A 228-amino-acid polypeptide reads, in one-letter code: tRNA (carboxymethyluridine(34)-5-O)-methyltransferase (228 aa).

The protein localises to the cytoplasm. It localises to the nucleus. It carries out the reaction 5-(carboxymethyl)uridine(34) in tRNA + S-adenosyl-L-methionine = 5-(2-methoxy-2-oxoethyl)uridine(34) in tRNA + S-adenosyl-L-homocysteine. Required for the methylation of the wobble bases at position 34 in tRNA. Appears to have a role in stress-response. The sequence is that of tRNA (carboxymethyluridine(34)-5-O)-methyltransferase (trm9) from Schizosaccharomyces pombe (strain 972 / ATCC 24843) (Fission yeast).